We begin with the raw amino-acid sequence, 128 residues long: Saitohin (128 aa).

The disordered stretch occupies residues 77 to 128; sequence SYSSEESSRNGAEQGRQLSIEGPFQGQNCPSHPAAALPLPMRGESQATSCQV.

In terms of assembly, interacts with PRDX6.

Its subcellular location is the cytoplasm. It is found in the nucleus. In Gorilla gorilla gorilla (Western lowland gorilla), this protein is Saitohin (STH).